The sequence spans 367 residues: Nociceptin receptor (367 aa).

The Extracellular segment spans residues 1 to 45; the sequence is MESLFPAPYWEVLYGSHFQGNLSLLNETVPHHLLLNASHSAFLPL. N-linked (GlcNAc...) asparagine glycosylation is found at Asn-21, Asn-26, and Asn-36. Residues 46-71 form a helical membrane-spanning segment; it reads GLKVTIVGLYLAVCIGGLLGNCLVMY. At 72–84 the chain is on the cytoplasmic side; the sequence is VILRHTKMKTATN. The helical transmembrane segment at 85–106 threads the bilayer; the sequence is IYIFNLALADTLVLLTLPFQGT. The Extracellular portion of the chain corresponds to 107–121; it reads DILLGFWPFGNALCK. A disulfide bond links Cys-120 and Cys-197. The helical transmembrane segment at 122-143 threads the bilayer; the sequence is TVIAIDYYNMFTSTFTLTAMSV. Residues 144–162 lie on the Cytoplasmic side of the membrane; it reads DRYVAICHPIRALDVRTSS. Residues 163 to 185 form a helical membrane-spanning segment; that stretch reads KAQAVNVAIWALASVVGVPVAIM. The Extracellular segment spans residues 186-208; that stretch reads GSAQVEDEEIECLVEIPAPQDYW. A helical transmembrane segment spans residues 209–233; that stretch reads GPVFAICIFLFSFIIPVLIISVCYS. Topologically, residues 234 to 261 are cytoplasmic; sequence LMIRRLRGVRLLSGSREKDRNLRRITRL. A helical membrane pass occupies residues 262-282; sequence VLVVVAVFVGCWTPVQVFVLV. Residues 283–297 are Extracellular-facing; it reads QGLGVQPGSETAVAI. The chain crosses the membrane as a helical span at residues 298–319; that stretch reads LRFCTALGYVNSCLNPILYAFL. The Cytoplasmic portion of the chain corresponds to 320-367; that stretch reads DENFKACFRKFCCASSLHREMQVSDRVRSIAKDVGLGCKTSETVPRPA. Cys-331 carries S-palmitoyl cysteine lipidation.

It belongs to the G-protein coupled receptor 1 family. In terms of processing, phosphorylation at Ser-360 requires GRK3. As to expression, highly expressed in several brain areas, the intestine, liver and spleen. Detected in sympathetic stellate ganglion neurons.

It localises to the cell membrane. The protein resides in the cytoplasmic vesicle. In terms of biological role, G-protein coupled opioid receptor that functions as a receptor for the endogenous neuropeptide nociceptin. Ligand binding causes a conformation change that triggers signaling via guanine nucleotide-binding proteins (G proteins) and modulates the activity of down-stream effectors. Signaling via G proteins mediates inhibition of adenylate cyclase activity and calcium channel activity. Arrestins modulate signaling via G proteins and mediate the activation of alternative signaling pathways that lead to the activation of MAP kinases. Plays a role in modulating nociception and the perception of pain. Plays a role in the regulation of locomotor activity by the neuropeptide nociceptin. This is Nociceptin receptor (Oprl1) from Rattus norvegicus (Rat).